Consider the following 248-residue polypeptide: ATP synthase subunit a, chloroplastic (248 aa).

5 helical membrane passes run 38–58 (QVLL…VLTV), 96–116 (VPFI…GALV), 135–155 (INTT…AGLA), 200–220 (LVVA…VMLL), and 221–241 (GLFT…AYIG).

It belongs to the ATPase A chain family. F-type ATPases have 2 components, CF(1) - the catalytic core - and CF(0) - the membrane proton channel. CF(1) has five subunits: alpha(3), beta(3), gamma(1), delta(1), epsilon(1). CF(0) has four main subunits: a, b, b' and c.

Its subcellular location is the plastid. It is found in the chloroplast thylakoid membrane. In terms of biological role, key component of the proton channel; it plays a direct role in the translocation of protons across the membrane. This is ATP synthase subunit a, chloroplastic from Welwitschia mirabilis (Tree tumbo).